The primary structure comprises 701 residues: DNA-directed RNA polymerase subunit beta' (701 aa).

Zn(2+)-binding residues include Cys76, Cys78, Cys94, and Cys97. The Mg(2+) site is built by Asp511, Asp513, and Asp515.

Belongs to the RNA polymerase beta' chain family. RpoC1 subfamily. In plastids the minimal PEP RNA polymerase catalytic core is composed of four subunits: alpha, beta, beta', and beta''. When a (nuclear-encoded) sigma factor is associated with the core the holoenzyme is formed, which can initiate transcription. Mg(2+) is required as a cofactor. The cofactor is Zn(2+).

The protein localises to the plastid. It localises to the chloroplast. The catalysed reaction is RNA(n) + a ribonucleoside 5'-triphosphate = RNA(n+1) + diphosphate. Functionally, DNA-dependent RNA polymerase catalyzes the transcription of DNA into RNA using the four ribonucleoside triphosphates as substrates. This is DNA-directed RNA polymerase subunit beta' from Pelargonium hortorum (Common geranium).